The following is a 1020-amino-acid chain: Retinoblastoma-related protein (1020 aa).

Composition is skewed to polar residues over residues 382-391 (SPTKTITSPL) and 398-409 (ASHTNGILGSTN). Residues 382–409 (SPTKTITSPLSPHRSPASHTNGILGSTN) form a disordered region. Residues 415–616 (TPVSTAMTTA…EKGSSMYNSL (202 aa)) form a domain A region. A pocket region spans residues 415–869 (TPVSTAMTTA…NEIFIPAAKP (455 aa)). The segment at 617-737 (TVARPSLSAE…PGGGGETCAE (121 aa)) is spacer. A domain B region spans residues 738–869 (TGINIFFSKI…NEIFIPAAKP (132 aa)).

Belongs to the retinoblastoma protein (RB) family.

The protein resides in the nucleus. Its function is as follows. Regulator of biological processes that recruits a histone deacetylase to control gene transcription. May play a role in the entry into mitosis, negatively regulating the cell proliferation. Formation of stable complexes with geminiviridae replication-associated proteins may create a cellular environment which favors viral DNA replication. In Ricinus communis (Castor bean), this protein is Retinoblastoma-related protein (RBR).